We begin with the raw amino-acid sequence, 262 residues long: Nodulation protein J (262 aa).

The 227-residue stretch at A33–R259 folds into the ABC transmembrane type-2 domain. 7 consecutive transmembrane segments (helical) span residues I35–M55, G62–S82, A102–A122, L127–L147, L148–V168, Y177–F197, and L231–L251.

This sequence belongs to the ABC-2 integral membrane protein family. Lipooligosaccharide exporter (TC 3.A.1.102) subfamily. In terms of assembly, the complex is composed of two ATP-binding proteins (NodI) and two transmembrane proteins (NodJ).

It localises to the cell inner membrane. Functionally, part of the ABC transporter complex NodIJ involved in the export of the nodulation factors (Nod factors), the bacterial signal molecules that induce symbiosis and subsequent nodulation induction. Nod factors are LCO (lipo-chitin oligosaccharide), a modified beta-1,4-linked N-acetylglucosamine oligosaccharide. This subunit encodes the transporter. This is Nodulation protein J (nodJ) from Rhizobium meliloti (strain 1021) (Ensifer meliloti).